The sequence spans 225 residues: Glutathione S-transferase Mu 3 (225 aa).

The GST N-terminal domain occupies Ser-5 to Gly-92. Residues Tyr-11–Trp-12, Trp-50–Lys-54, and Asn-63–Leu-64 each bind glutathione. Residue Lys-54 forms a Glycyl lysine isopeptide (Lys-Gly) (interchain with G-Cter in SUMO2) linkage. A Glycyl lysine isopeptide (Lys-Gly) (interchain with G-Cter in SUMO2) cross-link involves residue Lys-73. Gln-76–Ser-77 contributes to the glutathione binding site. The GST C-terminal domain occupies Thr-94–Ile-212. Position 120 (Tyr-120) interacts with substrate.

The protein belongs to the GST superfamily. Mu family. Homodimer. The N-terminus is blocked. As to expression, testis and brain.

The protein resides in the cytoplasm. The catalysed reaction is RX + glutathione = an S-substituted glutathione + a halide anion + H(+). Functionally, conjugation of reduced glutathione to a wide number of exogenous and endogenous hydrophobic electrophiles. May govern uptake and detoxification of both endogenous compounds and xenobiotics at the testis and brain blood barriers. This chain is Glutathione S-transferase Mu 3 (GSTM3), found in Homo sapiens (Human).